A 439-amino-acid chain; its full sequence is Methylenetetrahydrofolate--tRNA-(uracil-5-)-methyltransferase TrmFO (439 aa).

9-14 (GAGLAG) contacts FAD.

It belongs to the MnmG family. TrmFO subfamily. Requires FAD as cofactor.

The protein localises to the cytoplasm. The enzyme catalyses uridine(54) in tRNA + (6R)-5,10-methylene-5,6,7,8-tetrahydrofolate + NADH + H(+) = 5-methyluridine(54) in tRNA + (6S)-5,6,7,8-tetrahydrofolate + NAD(+). The catalysed reaction is uridine(54) in tRNA + (6R)-5,10-methylene-5,6,7,8-tetrahydrofolate + NADPH + H(+) = 5-methyluridine(54) in tRNA + (6S)-5,6,7,8-tetrahydrofolate + NADP(+). Catalyzes the folate-dependent formation of 5-methyl-uridine at position 54 (M-5-U54) in all tRNAs. The sequence is that of Methylenetetrahydrofolate--tRNA-(uracil-5-)-methyltransferase TrmFO from Lactobacillus delbrueckii subsp. bulgaricus (strain ATCC BAA-365 / Lb-18).